The chain runs to 306 residues: N-acetylmuramic acid/N-acetylglucosamine kinase (306 aa).

An ATP-binding site is contributed by Ser-12. Asn-35 contacts substrate. Thr-124 is a binding site for ATP. Residues 142 to 144 (GWG) and Asp-149 each bind substrate. Ala-208 is an ATP binding site.

This sequence belongs to the eukaryotic-type N-acetylglucosamine kinase family. Requires Mg(2+) as cofactor.

Its subcellular location is the cytoplasm. The catalysed reaction is N-acetyl-D-glucosamine + ATP = N-acetyl-D-glucosamine 6-phosphate + ADP + H(+). It carries out the reaction N-acetyl-D-muramate + ATP = N-acetyl-D-muramate 6-phosphate + ADP + H(+). It functions in the pathway cell wall biogenesis; peptidoglycan recycling. Its function is as follows. Catalyzes the ATP-dependent phosphorylation of both cell wall (peptidoglycan) amino sugars, N-acetylmuramic acid (MurNAc) and N-acetylglucosamine (GlcNAc), at the 6-hydroxyl group. Neither the non-N-acetylated forms of the cell wall sugars, i.e., glucosamine and/or muramic acid, nor epimeric hexoses or 1,6-anhydro-MurNAc are substrates for the enzyme. May have a role in the rescue of the murein sugars GlcNAc and MurNAc released from muropeptides during cell wall turnover in C.acetobutylicum. The sequence is that of N-acetylmuramic acid/N-acetylglucosamine kinase from Clostridium acetobutylicum (strain ATCC 824 / DSM 792 / JCM 1419 / IAM 19013 / LMG 5710 / NBRC 13948 / NRRL B-527 / VKM B-1787 / 2291 / W).